The following is a 365-amino-acid chain: Sulfate/thiosulfate import ATP-binding protein CysA (365 aa).

One can recognise an ABC transporter domain in the interval 3–237; it reads IEIANIKKSF…PATRFVLEFM (235 aa). Residue 35 to 42 coordinates ATP; that stretch reads GPSGSGKT.

It belongs to the ABC transporter superfamily. Sulfate/tungstate importer (TC 3.A.1.6) family. The complex is composed of two ATP-binding proteins (CysA), two transmembrane proteins (CysT and CysW) and a solute-binding protein (CysP).

The protein localises to the cell inner membrane. The enzyme catalyses sulfate(out) + ATP + H2O = sulfate(in) + ADP + phosphate + H(+). The catalysed reaction is thiosulfate(out) + ATP + H2O = thiosulfate(in) + ADP + phosphate + H(+). In terms of biological role, part of the ABC transporter complex CysAWTP involved in sulfate/thiosulfate import. Responsible for energy coupling to the transport system. The sequence is that of Sulfate/thiosulfate import ATP-binding protein CysA from Shigella flexneri.